A 441-amino-acid chain; its full sequence is Xylose isomerase (441 aa).

Catalysis depends on residues histidine 99 and aspartate 102. 6 residues coordinate Mn(2+): glutamate 230, glutamate 266, aspartate 294, aspartate 305, aspartate 307, and aspartate 337.

It belongs to the xylose isomerase family. Homotetramer. Mn(2+) is required as a cofactor.

Its subcellular location is the cytoplasm. It carries out the reaction alpha-D-xylose = alpha-D-xylulofuranose. The sequence is that of Xylose isomerase (xylA) from Geobacillus stearothermophilus (Bacillus stearothermophilus).